A 102-amino-acid polypeptide reads, in one-letter code: UV-induced protein uvi31 (102 aa).

It belongs to the BolA/IbaG family.

The protein localises to the mitochondrion matrix. It is found in the cytoplasm. It localises to the nucleus. Acts as a mitochondrial iron-sulfur (Fe-S) cluster assembly factor that facilitates [4Fe-4S] cluster insertion into a subset of mitochondrial proteins such as lipoyl synthase (LS) and succinate dehydrogenase (SDH). Required during the last step of iron-sulfur protein assembly when the iron-sulfur cluster is inserted into the target protein. Probably acts together with the monothiol glutaredoxin grx5. Not required for [2Fe-2S] cluster insertion into mitochondrial proteins. May be involved in control of cell division, especially during the resumption from cell cycle arrest. This Schizosaccharomyces pombe (strain 972 / ATCC 24843) (Fission yeast) protein is UV-induced protein uvi31.